Consider the following 239-residue polypeptide: MIELIPAIDIIDGKCVRLSQGDYGSKKVYNENPVEVAKEFEANGIRRLHVVDLDGAASHHVVNYRTLDLIASRTSLIIDFGGGLKSDEDLIIAFENGAQMVTGGSIAVRNPDLFCRWIDRYGSGKIILGADVKDRRIAVNGWKVESTCELFPFLKDYTQKGIEKVICTDISCDGMLAGPSLDLYKEILAEHPTLYLIASGGVSSIADIEALHEAGVPAVIFGKALYEGRITLKELQAFL.

Asp-9 acts as the Proton acceptor in catalysis. Asp-131 functions as the Proton donor in the catalytic mechanism.

This sequence belongs to the HisA/HisF family.

It localises to the cytoplasm. It catalyses the reaction 1-(5-phospho-beta-D-ribosyl)-5-[(5-phospho-beta-D-ribosylamino)methylideneamino]imidazole-4-carboxamide = 5-[(5-phospho-1-deoxy-D-ribulos-1-ylimino)methylamino]-1-(5-phospho-beta-D-ribosyl)imidazole-4-carboxamide. Its pathway is amino-acid biosynthesis; L-histidine biosynthesis; L-histidine from 5-phospho-alpha-D-ribose 1-diphosphate: step 4/9. This chain is 1-(5-phosphoribosyl)-5-[(5-phosphoribosylamino)methylideneamino] imidazole-4-carboxamide isomerase, found in Bacteroides fragilis (strain YCH46).